Reading from the N-terminus, the 404-residue chain is Serine/threonine transporter SstT (404 aa).

8 consecutive transmembrane segments (helical) span residues 17 to 37 (IGIGVVIGVMLGILAPDLTGF), 39 to 59 (ILGKLFVGGLKAIAPLLVFAL), 75 to 95 (MTLIIVLYLFGTFASALVAVL), 138 to 158 (ALATANYIGVLSWAIIFGLAL), 179 to 199 (IVVWIINLAPIGIMSLVFTTI), 212 to 232 (FLILVLVGTMLFVALVVNPLI), 287 to 307 (IPLGATINMGGAAITINVLTL), and 313 to 333 (FGIPIDFLTALLLSVVAAVSA).

This sequence belongs to the dicarboxylate/amino acid:cation symporter (DAACS) (TC 2.A.23) family.

The protein localises to the cell membrane. It carries out the reaction L-serine(in) + Na(+)(in) = L-serine(out) + Na(+)(out). It catalyses the reaction L-threonine(in) + Na(+)(in) = L-threonine(out) + Na(+)(out). Functionally, involved in the import of serine and threonine into the cell, with the concomitant import of sodium (symport system). In Streptococcus pyogenes serotype M1, this protein is Serine/threonine transporter SstT.